Consider the following 767-residue polypeptide: MDPETLDDLVNELFDKKKQLTVSQKQQREKLQAYMMAQLEGSSSASDDDDEDDGEGEDDNDSNSDEDESGSESDATSADDSFSSDDNDDDDSGDEDGSDSGGSDSDLSFEDDSDYEDSHSTEDLTEYTINSENSSVEPTPPKRLKAGDKRPCSTQEEEESEDDNNNKPTARKLQMGESATNGRIQQRKSMVEPATTSKPASCPLTRKSLPANGSAAKSCPLPPKNQKQSAAAKSCPLPPKEKKLSSGAVAKSCPLPPKNEKPSSSGASCPLPSKTSKQVQPRVCQLSDKPKSSSSQSTQKRSKNEAAEGATDTNGRQEAHRQNSIEEGRRILSWVLNPIKPDDFFKDFWEKNACQVQRNAPTYFSELISFEMIDQMMLKHHLEFTTNIDVTSYKDGRRETLNPEGRAMPPTVWGFYGEGCSIRILNPSTYLPGLRTMCSLMQEFFHCLVGANVYLTPPNSQGFAPHFDDIEAFVLQVEGRKRWRLYMPLQPSDVLARESSGNYTPDQLGEPIFDEVLKPGDVLYFPRGTVHQAITEKKHHSLHITLSVYQQQAYANLLEKLMPMVLQSAIKHSVSLRRGLPLHTWQHLGIAHGATKCSSRSQLIKGIQEMVQQHLTPSENQIDAAVDQLAKRYQHEALPPTILPEEKLRTVFGSRSATDAHGKCLCDYELTEDTSIRLLRANILRLVVDETHLRVYYYVDNALEYCKYEANFMEIEPTEAAAVETLMHAYPAYVKISMLPLRKPERRIEVATALWERGLLMTETPFK.

The disordered stretch occupies residues 21 to 324 (TVSQKQQREK…GRQEAHRQNS (304 aa)). A Phosphoserine modification is found at Ser44. Over residues 46–71 (SDDDDEDDGEGEDDNDSNSDEDESGS) the composition is skewed to acidic residues. A compositionally biased stretch (low complexity) spans 72–81 (ESDATSADDS). The segment covering 82–98 (FSSDDNDDDDSGDEDGS) has biased composition (acidic residues). Composition is skewed to polar residues over residues 127–137 (YTINSENSSVE) and 177–199 (ESAT…TSKP). At Ser214 the chain carries Phosphoserine. Positions 262-279 (PSSSGASCPLPSKTSKQV) are enriched in polar residues. A compositionally biased stretch (basic and acidic residues) spans 315 to 324 (GRQEAHRQNS). One can recognise a JmjC domain in the interval 420–565 (CSIRILNPST…NLLEKLMPMV (146 aa)). Residues His466, Asp468, and His531 each contribute to the Fe cation site.

Belongs to the ROX family. NO66 subfamily. Requires Fe(2+) as cofactor.

The protein resides in the nucleus. It catalyses the reaction N(6),N(6)-dimethyl-L-lysyl(36)-[histone H3] + 2 2-oxoglutarate + 2 O2 = L-lysyl(36)-[histone H3] + 2 formaldehyde + 2 succinate + 2 CO2. Functionally, oxygenase that can act as both a histone lysine demethylase and a ribosomal histidine hydroxylase. Specifically demethylates 'Lys-4' (H3K4me) and 'Lys-36' (H3K36me) of histone H3, thereby playing a central role in histone code. The chain is Bifunctional lysine-specific demethylase and histidyl-hydroxylase NO66 from Drosophila willistoni (Fruit fly).